Reading from the N-terminus, the 428-residue chain is uncharacterized protein (428 aa).

3 disordered regions span residues 1–25 (MRDN…PTRT), 157–219 (DTAK…TEQV), and 247–271 (DFGT…PWRP). The span at 12-22 (GSESQQTTYDP) shows a compositional bias: polar residues. Basic and acidic residues predominate over residues 157–171 (DTAKSNEKLQGDESK). The segment covering 172–186 (SSNGSSSTSTTTQRG) has biased composition (low complexity). Over residues 206 to 217 (GSQGNSGEQGTE) the composition is skewed to polar residues.

This sequence belongs to the adhesin P1 family.

This is an uncharacterized protein from Mycoplasma pneumoniae (strain ATCC 29342 / M129 / Subtype 1) (Mycoplasmoides pneumoniae).